The sequence spans 309 residues: Olfactory receptor 5AK2 (309 aa).

The Extracellular portion of the chain corresponds to 1-25 (MTLGNSTEVTEFYLLGFGAQHEFWC). A glycan (N-linked (GlcNAc...) asparagine) is linked at asparagine 5. The helical transmembrane segment at 26–46 (ILFIVFLLIYVTSIMGNSGII) threads the bilayer. Topologically, residues 47-54 (LLINTDSR) are cytoplasmic. Residues 55–75 (FQTLTYFFLQHLAFVDICYTS) form a helical membrane-spanning segment. Over 76–99 (AITPKMLQSFTEEKNLMLFQGCVI) the chain is Extracellular. Cysteine 97 and cysteine 189 are oxidised to a cystine. Residues 100–120 (QFLVYATFATSDCYLLAMMAV) form a helical membrane-spanning segment. Topologically, residues 121–133 (DPYVAICKPLHYT) are cytoplasmic. A helical transmembrane segment spans residues 134 to 154 (VIMSRTVCIRLVAGSYIMGSI). Asparagine 155 carries N-linked (GlcNAc...) asparagine glycosylation. At 155–196 (NASVQTGFTCSLSFCKSNSINHFFCDVPPILALSCSNVDINI) the chain is on the extracellular side. Residues 197–217 (MLLVVFVGSNLIFTGLVVIFS) traverse the membrane as a helical segment. Topologically, residues 218 to 237 (YIYIMATILKMSSSAGRKKS) are cytoplasmic. Residues 238-258 (FSTCASHLTAVTIFYGTLSYM) form a helical membrane-spanning segment. The Extracellular segment spans residues 259-271 (YLQSHSNNSQENM). A glycan (N-linked (GlcNAc...) asparagine) is linked at asparagine 265. A helical membrane pass occupies residues 272 to 292 (KVAFIFYGTVIPMLNPLIYSL). Residues 293 to 309 (RNKEVKEALKVIGKKLF) are Cytoplasmic-facing.

Belongs to the G-protein coupled receptor 1 family.

The protein localises to the cell membrane. Its function is as follows. Odorant receptor. The protein is Olfactory receptor 5AK2 (OR5AK2) of Homo sapiens (Human).